Consider the following 226-residue polypeptide: Putative N-acetylmannosamine-6-phosphate 2-epimerase (226 aa).

Belongs to the NanE family.

It catalyses the reaction an N-acyl-D-glucosamine 6-phosphate = an N-acyl-D-mannosamine 6-phosphate. It functions in the pathway amino-sugar metabolism; N-acetylneuraminate degradation; D-fructose 6-phosphate from N-acetylneuraminate: step 3/5. Functionally, converts N-acetylmannosamine-6-phosphate (ManNAc-6-P) to N-acetylglucosamine-6-phosphate (GlcNAc-6-P). The polypeptide is Putative N-acetylmannosamine-6-phosphate 2-epimerase (Mycoplasma mycoides subsp. mycoides SC (strain CCUG 32753 / NCTC 10114 / PG1)).